Here is a 112-residue protein sequence, read N- to C-terminus: Nucleoid-associated protein FTN_1196 (112 aa).

Residues 1-27 (MNFDMSKLMQQAQKMQEQMKKAQQERE) are disordered. Basic and acidic residues predominate over residues 17-27 (EQMKKAQQERE).

The protein belongs to the YbaB/EbfC family. Homodimer.

The protein localises to the cytoplasm. Its subcellular location is the nucleoid. In terms of biological role, binds to DNA and alters its conformation. May be involved in regulation of gene expression, nucleoid organization and DNA protection. The sequence is that of Nucleoid-associated protein FTN_1196 from Francisella tularensis subsp. novicida (strain U112).